Here is a 113-residue protein sequence, read N- to C-terminus: Cholecystoxin (113 aa).

The signal sequence occupies residues Met-1–Gly-20. Residues Gln-21 to Arg-79 constitute a propeptide that is removed on maturation. The segment at Ala-77–Gly-97 is disordered. Tyr-95 is modified (sulfotyrosine). Phenylalanine amide is present on Phe-101. The propeptide occupies Gly-102–Ser-113.

Belongs to the gastrin/cholecystokinin family. As to expression, expressed by the mandibular venom gland.

It is found in the secreted. In terms of biological role, cholecystokinin-22: hypotensive neuropeptide that binds cholecystokinin receptor type A receptor (CCKAR). Its function is as follows. Cholecystokinin-8: hypotensive neuropeptide that binds cholecystokinin receptor type A receptor (CCKAR). The polypeptide is Cholecystoxin (Varanus varius (Lace monitor lizard)).